The following is a 98-amino-acid chain: Large ribosomal subunit protein bL28 (98 aa).

The protein belongs to the bacterial ribosomal protein bL28 family.

This is Large ribosomal subunit protein bL28 from Beijerinckia indica subsp. indica (strain ATCC 9039 / DSM 1715 / NCIMB 8712).